Reading from the N-terminus, the 430-residue chain is Tektin-2 (430 aa).

Coiled-coil stretches lie at residues 75–162 (KETL…FQHL) and 226–380 (KNRA…IACK).

Belongs to the tektin family. Microtubule inner protein component of sperm flagellar doublet microtubules. May interact with CCDC172. Ubiquitinated, leading to its degradation. Deubiquitinated by USP16, promoting its stability. Post-translationally, tyrosine phosphorylated. Expressed in the testes (at protein level).

The protein localises to the cytoplasm. It is found in the cytoskeleton. Its subcellular location is the cilium axoneme. It localises to the flagellum axoneme. The protein resides in the microtubule organizing center. Microtubule inner protein (MIP) part of the dynein-decorated doublet microtubules (DMTs) in cilia and flagellar axoneme. Plays a key role in the assembly or attachment of the inner dynein arm to microtubules in sperm flagella and tracheal cilia. Forms filamentous polymers in the walls of ciliary and flagellar microtubules. The polypeptide is Tektin-2 (Tekt2) (Mus musculus (Mouse)).